Here is a 344-residue protein sequence, read N- to C-terminus: Geranylgeranyl transferase type-2 subunit alpha (344 aa).

PFTA repeat units follow at residues 44–78 (YSEG…NDVF), 89–123 (LLDN…NAPY), 125–159 (NWNY…QIER), 165–199 (LAKK…TILN), 214–248 (ILEQ…HCNP), and 266–293 (YLQK…SLVN).

This sequence belongs to the protein prenyltransferase subunit alpha family. In terms of assembly, heterodimer of an alpha and a beta subunit.

The catalysed reaction is geranylgeranyl diphosphate + L-cysteinyl-[protein] = S-geranylgeranyl-L-cysteinyl-[protein] + diphosphate. In terms of biological role, catalyzes the transfer of a geranyl-geranyl moiety from geranyl-geranyl pyrophosphate to proteins having the C-terminal-XCC or -XCXC, where both cysteines may become modified. The protein is Geranylgeranyl transferase type-2 subunit alpha (bet4) of Schizosaccharomyces pombe (strain 972 / ATCC 24843) (Fission yeast).